Consider the following 1018-residue polypeptide: Serine/threonine-protein phosphatase BSL2 (1018 aa).

Residues 1-75 (MDEDSSMVAD…AAAVVGQEQQ (75 aa)) are disordered. A compositionally biased stretch (pro residues) spans 41-57 (SPPPEGGSVPTPPPSDP). Positions 63 to 75 (QQQAAAVVGQEQQ) are enriched in low complexity. 5 Kelch repeats span residues 149–195 (TSAG…VATA), 253–301 (YLMA…TASA), 306–356 (LLLL…VFVN), 362–409 (SGGA…DAAG), and 430–479 (LIFI…RLPG). The segment at 569–590 (DRDCGAEATPSGKPTFSLIKPD) is disordered. S627 is modified (phosphoserine). 4 residues coordinate Mn(2+): D720, H722, D754, and N786. H787 acts as the Proton donor in catalysis. Positions 839 and 918 each coordinate Mn(2+). Phosphoserine is present on S975. Positions 994–1011 (ANRPATPTRGRPQNSNDR) are enriched in polar residues. The disordered stretch occupies residues 994–1018 (ANRPATPTRGRPQNSNDRGGSLAWM).

Belongs to the PPP phosphatase family. BSU subfamily. In terms of assembly, interacts with BSK8. Requires Mn(2+) as cofactor. In terms of tissue distribution, expressed throughout the plant, with a higher level in younger parts.

The protein localises to the cytoplasm. Its subcellular location is the cell membrane. It localises to the nucleus. It carries out the reaction O-phospho-L-seryl-[protein] + H2O = L-seryl-[protein] + phosphate. The catalysed reaction is O-phospho-L-threonyl-[protein] + H2O = L-threonyl-[protein] + phosphate. Phosphatase involved in elongation process, probably by acting as a regulator of brassinolide signaling. The polypeptide is Serine/threonine-protein phosphatase BSL2 (BSL2) (Arabidopsis thaliana (Mouse-ear cress)).